Consider the following 299-residue polypeptide: MPSPPYLGRFAPSPTGPLHFGSLLAAFGSWLLARHAGGQWCVRIEDIDPPRAEPGACERQLRTLAAFGLHSDLPVIRQSERDAAYTAAITRLLQTGQAFECSCSRADLAGMGGIHHACVAPLGERRAVRLRVPPQPPVGFDDALQGPVLQDVYAEVGDVVLRRADGYWAYQLAVVVDDAAQGITDVVRGADLLDSTPRQMVLQRALGLPQPRYLHLPLMLDRDGRKLSKSHDAPALDDADPLPALHAAWAALGQESDALPRHAAVETVLQHAVQHFSPRLLPRQRELDLDERASGLQRD.

L-glutamate is bound by residues 9–13 and E45; that span reads RFAPS. The 'HIGH' region signature appears at 12-22; that stretch reads PSPTGPLHFGS. C101, C103, and C118 together coordinate Zn(2+). Residues Y170 and R188 each coordinate L-glutamate. A 'KMSKS' region motif is present at residues 226–230; it reads KLSKS. An ATP-binding site is contributed by K229.

It belongs to the class-I aminoacyl-tRNA synthetase family. GluQ subfamily. Requires Zn(2+) as cofactor.

Catalyzes the tRNA-independent activation of glutamate in presence of ATP and the subsequent transfer of glutamate onto a tRNA(Asp). Glutamate is transferred on the 2-amino-5-(4,5-dihydroxy-2-cyclopenten-1-yl) moiety of the queuosine in the wobble position of the QUC anticodon. The protein is Glutamyl-Q tRNA(Asp) synthetase of Xanthomonas axonopodis pv. citri (strain 306).